Here is a 955-residue protein sequence, read N- to C-terminus: RNA polymerase-associated protein RapA (955 aa).

Positions 163 to 333 (EVGHRYAPRV…FARLRLLDPE (171 aa)) constitute a Helicase ATP-binding domain. Residue 176-183 (DEVGLGKT) coordinates ATP. The DEAH box motif lies at 279–282 (DEAH). In terms of domain architecture, Helicase C-terminal spans 478–642 (RVEWLLELLL…AVRDELFELL (165 aa)).

Belongs to the SNF2/RAD54 helicase family. RapA subfamily. As to quaternary structure, interacts with the RNAP. Has a higher affinity for the core RNAP than for the holoenzyme. Its ATPase activity is stimulated by binding to RNAP.

Transcription regulator that activates transcription by stimulating RNA polymerase (RNAP) recycling in case of stress conditions such as supercoiled DNA or high salt concentrations. Probably acts by releasing the RNAP, when it is trapped or immobilized on tightly supercoiled DNA. Does not activate transcription on linear DNA. Probably not involved in DNA repair. The chain is RNA polymerase-associated protein RapA from Aeromonas hydrophila subsp. hydrophila (strain ATCC 7966 / DSM 30187 / BCRC 13018 / CCUG 14551 / JCM 1027 / KCTC 2358 / NCIMB 9240 / NCTC 8049).